The chain runs to 683 residues: Dixin (683 aa).

Residue leucine 2 is the site of N-myristoyl glycine attachment. One can recognise a Calponin-homology (CH) domain in the interval 20 to 127 (EQQLQAYVAW…LVLALAAHFK (108 aa)). Positions 127–300 (KPGSSRTVNQ…LEKEMEEAKK (174 aa)) are actin-binding. Serine 186 carries the phosphoserine modification. A disordered region spans residues 207–235 (GQQRSPSESSCSSLTSPSPIHSAKSESII). Low complexity predominate over residues 211-228 (SPSESSCSSLTSPSPIHS). At serine 231 the chain carries Phosphoserine. Residues 279–452 (SWEEQLLEQQ…EALRKLSDVS (174 aa)) adopt a coiled-coil conformation. A compositionally biased stretch (polar residues) spans 482–492 (NYNSHNSQSNG). 2 disordered regions span residues 482-509 (NYNSHNSQSNGFLLPTAGKGATSVSNRG) and 556-594 (TQKKQERKVRVKSPRTQVGSEYRESWPPNSKLPHSQSSP). Serine 590 is subject to Phosphoserine. The 81-residue stretch at 600 to 680 (CTKVLYFTDR…KIVAWVEEDH (81 aa)) folds into the DIX domain.

Belongs to the DIXDC1 family. As to quaternary structure, isoform 1 but not isoform 2 binds filamentous actin. Interacts with the complex composed of DVL2 and Rac. Interacts with AXIN1; competes with MAP3K1. Interacts with MAP3K4 preventing MAP3K4 interaction with AXIN1. Directly interacts (via DIX domain) with DVL2 (via DIX domain). Interacts with gamma-tubulin. In terms of processing, phosphorylated on tyrosine and serine residues. Polyubiquitinated, leading to its proteasomal degradation. WNT3A signaling increases DIXDC1 protein levels by inhibiting its ubiquitination and subsequent degradation. As to expression, ubiquitously expressed with higher expression in cardiac and skeletal muscles.

It localises to the cell junction. The protein localises to the focal adhesion. It is found in the cytoplasm. Its subcellular location is the cytoskeleton. The protein resides in the stress fiber. Positive effector of the Wnt signaling pathway; activates WNT3A signaling via DVL2. Regulates JNK activation by AXIN1 and DVL2. This is Dixin (DIXDC1) from Homo sapiens (Human).